A 291-amino-acid chain; its full sequence is Light-independent protochlorophyllide reductase iron-sulfur ATP-binding protein (291 aa).

Residues 10–15 (GIGKST) and K39 each bind ATP. S14 serves as a coordination point for Mg(2+). The [4Fe-4S] cluster site is built by C95 and C129. 180-181 (NR) is a binding site for ATP.

This sequence belongs to the NifH/BchL/ChlL family. Homodimer. Protochlorophyllide reductase is composed of three subunits; ChlL, ChlN and ChlB. It depends on [4Fe-4S] cluster as a cofactor.

It localises to the plastid. The protein resides in the chloroplast. The enzyme catalyses chlorophyllide a + oxidized 2[4Fe-4S]-[ferredoxin] + 2 ADP + 2 phosphate = protochlorophyllide a + reduced 2[4Fe-4S]-[ferredoxin] + 2 ATP + 2 H2O. The protein operates within porphyrin-containing compound metabolism; chlorophyll biosynthesis (light-independent). Functionally, component of the dark-operative protochlorophyllide reductase (DPOR) that uses Mg-ATP and reduced ferredoxin to reduce ring D of protochlorophyllide (Pchlide) to form chlorophyllide a (Chlide). This reaction is light-independent. The L component serves as a unique electron donor to the NB-component of the complex, and binds Mg-ATP. The polypeptide is Light-independent protochlorophyllide reductase iron-sulfur ATP-binding protein (Pinus thunbergii (Japanese black pine)).